Here is a 362-residue protein sequence, read N- to C-terminus: D-alanine--D-alanine ligase (362 aa).

One can recognise an ATP-grasp domain in the interval 134–345 (KILAQRAGVP…YPDLITRLIR (212 aa)). 170-225 (GQLGTSNLFVKPSNQGSSVGITHVTDDSNYAEALAEAFKYDDKVLVEEGIVGTEVE) is a binding site for ATP. D298, E312, and N314 together coordinate Mg(2+).

The protein belongs to the D-alanine--D-alanine ligase family. It depends on Mg(2+) as a cofactor. Mn(2+) is required as a cofactor.

Its subcellular location is the cytoplasm. The catalysed reaction is 2 D-alanine + ATP = D-alanyl-D-alanine + ADP + phosphate + H(+). It participates in cell wall biogenesis; peptidoglycan biosynthesis. Cell wall formation. The chain is D-alanine--D-alanine ligase from Lactobacillus delbrueckii subsp. bulgaricus (strain ATCC 11842 / DSM 20081 / BCRC 10696 / JCM 1002 / NBRC 13953 / NCIMB 11778 / NCTC 12712 / WDCM 00102 / Lb 14).